A 125-amino-acid chain; its full sequence is Upsalin (125 aa).

The first 16 residues, 1–16 (MFPTHVLLIVIACVTA), serve as a signal peptide directing secretion.

In terms of processing, weakly glycosylated. In terms of tissue distribution, expressed at highest levels in mantle, followed by adductor muscle. Found in the nacreous shell layer (at protein level).

The protein resides in the secreted. The polypeptide is Upsalin (Unio pictorum (Painter's mussel)).